The following is a 396-amino-acid chain: Elongation factor Tu 2 (396 aa).

One can recognise a tr-type G domain in the interval 10 to 206 (KPHVNIGTIG…AVDSYIPTPQ (197 aa)). Residues 19-26 (GHVDHGKT) are G1. GTP is bound at residue 19 to 26 (GHVDHGKT). T26 contacts Mg(2+). Positions 60–64 (GITIS) are G2. A G3 region spans residues 81-84 (DCPG). Residues 81–85 (DCPGH) and 136–139 (NKVD) contribute to the GTP site. A G4 region spans residues 136–139 (NKVD). The segment at 174-176 (SAL) is G5.

It belongs to the TRAFAC class translation factor GTPase superfamily. Classic translation factor GTPase family. EF-Tu/EF-1A subfamily. Monomer.

It localises to the cytoplasm. The enzyme catalyses GTP + H2O = GDP + phosphate + H(+). In terms of biological role, GTP hydrolase that promotes the GTP-dependent binding of aminoacyl-tRNA to the A-site of ribosomes during protein biosynthesis. In Myxococcus xanthus (strain DK1622), this protein is Elongation factor Tu 2.